The chain runs to 941 residues: Lysine-specific demethylase 7A (941 aa).

The PHD-type zinc finger occupies 37-88 (PVYCVCRQPYDVNRFMIECDICKDWFHGSCVGVEEHHAVDIDLYHCPNCAVL). Residues 97–114 (RRNWHRHDYTEIDDGSKP) form a linker region. The JmjC domain occupies 230–386 (FSDTKMSELV…MQLRCYEMEK (157 aa)). Thr279 is a binding site for substrate. Fe cation contacts are provided by His282 and Asp284. Lys299 contacts substrate. A Fe cation-binding site is contributed by His354. 3 disordered regions span residues 597–633 (QSLY…EHEE), 677–700 (TTEE…KEES), and 819–921 (QDLS…MATA). Ser604 is modified (phosphoserine). Composition is skewed to basic and acidic residues over residues 618 to 633 (MKIE…EHEE) and 685 to 700 (GDEK…KEES). A compositionally biased stretch (polar residues) spans 834 to 876 (SEISQRVQSRNYVDSSGSSLQNGKYMQNSNLTSGACQISNGSL).

The protein belongs to the JHDM1 histone demethylase family. JHDM1D subfamily. It depends on Fe(2+) as a cofactor.

The protein resides in the nucleus. The catalysed reaction is N(6),N(6)-dimethyl-L-lysyl(9)-[histone H3] + 2 2-oxoglutarate + 2 O2 = L-lysyl(9)-[histone H3] + 2 formaldehyde + 2 succinate + 2 CO2. It catalyses the reaction N(6),N(6)-dimethyl-L-lysyl(27)-[histone H3] + 2 2-oxoglutarate + 2 O2 = L-lysyl(27)-[histone H3] + 2 formaldehyde + 2 succinate + 2 CO2. It carries out the reaction N(6),N(6)-dimethyl-L-lysyl(36)-[histone H3] + 2-oxoglutarate + O2 = N(6)-methyl-L-lysyl(36)-[histone H3] + formaldehyde + succinate + CO2. The enzyme catalyses N(6)-methyl-L-lysyl(20)-[histone H4] + 2-oxoglutarate + O2 = L-lysyl(20)-[histone H4] + formaldehyde + succinate + CO2. In terms of biological role, histone demethylase required for brain development. Specifically demethylates dimethylated 'Lys-9', 'Lys-27' and 'Lys-36' (H3K9me2, H3K27me2, H3K36me2, respectively) of histone H3 and monomethylated histone H4 'Lys-20' residue (H4K20Me1), thereby playing a central role in histone code. Specifically binds trimethylated 'Lys-4' of histone H3 (H3K4me3), affecting histone demethylase specificity: in presence of H3K4me3, it has no demethylase activity toward H3K9me2, while it has high activity toward H3K27me2. Demethylates H3K9me2 in absence of H3K4me3. Has activity toward H4K20Me1 only when nucleosome is used as a substrate and when not histone octamer is used as substrate. This chain is Lysine-specific demethylase 7A (KDM7A), found in Homo sapiens (Human).